The sequence spans 264 residues: Putative hydro-lyase cgR_2449 (264 aa).

This sequence belongs to the D-glutamate cyclase family.

In Corynebacterium glutamicum (strain R), this protein is Putative hydro-lyase cgR_2449.